The sequence spans 335 residues: Methionine import ATP-binding protein MetN 2 (335 aa).

Residues I2–V242 form the ABC transporter domain. Residue G38–S45 coordinates ATP.

Belongs to the ABC transporter superfamily. Methionine importer (TC 3.A.1.24) family. The complex is composed of two ATP-binding proteins (MetN), two transmembrane proteins (MetI) and a solute-binding protein (MetQ).

It is found in the cell inner membrane. It catalyses the reaction L-methionine(out) + ATP + H2O = L-methionine(in) + ADP + phosphate + H(+). The enzyme catalyses D-methionine(out) + ATP + H2O = D-methionine(in) + ADP + phosphate + H(+). Functionally, part of the ABC transporter complex MetNIQ involved in methionine import. Responsible for energy coupling to the transport system. The polypeptide is Methionine import ATP-binding protein MetN 2 (Pseudomonas syringae pv. tomato (strain ATCC BAA-871 / DC3000)).